The chain runs to 213 residues: Protein SRN2 (213 aa).

The region spanning serine 128–tyrosine 213 is the VPS37 C-terminal domain.

Belongs to the VPS37 family. As to quaternary structure, component of the ESCRT-I complex (endosomal sorting complex required for transport I) which consists of STP22, VPS28, SRN2 and MVB12 in a 1:1:1:1 stoichiometry. Interacts with STP22 and MVB12.

The protein localises to the cytoplasm. It localises to the endosome. Its subcellular location is the late endosome membrane. Its function is as follows. Component of the ESCRT-I complex, a regulator of vesicular trafficking process. Required for normal endocytic and biosynthetic traffic to the yeast vacuole. This chain is Protein SRN2 (SRN2), found in Saccharomyces cerevisiae (strain ATCC 204508 / S288c) (Baker's yeast).